Here is a 106-residue protein sequence, read N- to C-terminus: UPF0235 protein OCAR_4310/OCA5_c02140 (106 aa).

It belongs to the UPF0235 family.

In Afipia carboxidovorans (strain ATCC 49405 / DSM 1227 / KCTC 32145 / OM5) (Oligotropha carboxidovorans), this protein is UPF0235 protein OCAR_4310/OCA5_c02140.